We begin with the raw amino-acid sequence, 1008 residues long: Pre-mRNA-splicing factor SNU114 (1008 aa).

Ser85 is modified (phosphoserine). Thr88 is subject to Phosphothreonine. Positions 131-338 constitute a tr-type G domain; the sequence is ERIINVGVIG…SYYYAHSIPS (208 aa). Residues 140–147 are G1; the sequence is GPLHSGKT. 140–147 provides a ligand contact to GTP; the sequence is GPLHSGKT. A G2 region spans residues 188–192; sequence GLSIK. The segment at 214–217 is G3; sequence DAPG. GTP-binding positions include 214–218 and 268–271; these read DAPGH and NKLD. The interval 268–271 is G4; that stretch reads NKLD. Residues 315–317 are G5; it reads STK. Residues 504 to 536 form a disordered region; the sequence is TSQSESRQKRQLHDISKTETSNEDEDEDDETPS. Residues 509 to 520 are compositionally biased toward basic and acidic residues; sequence SRQKRQLHDISK. The span at 524 to 536 shows a compositional bias: acidic residues; that stretch reads SNEDEDEDDETPS.

It belongs to the TRAFAC class translation factor GTPase superfamily. Classic translation factor GTPase family. EF-G/EF-2 subfamily. As to quaternary structure, belongs to the CWC complex (or CEF1-associated complex), a spliceosome sub-complex reminiscent of a late-stage spliceosome composed of the U2, U5 and U6 snRNAs and at least BUD13, BUD31, BRR2, CDC40, CEF1, CLF1, CUS1, CWC2, CWC15, CWC21, CWC22, CWC23, CWC24, CWC25, CWC27, ECM2, HSH155, IST3, ISY1, LEA1, MSL1, NTC20, PRP8, PRP9, PRP11, PRP19, PRP21, PRP22, PRP45, PRP46, SLU7, SMB1, SMD1, SMD2, SMD3, SMX2, SMX3, SNT309, SNU114, SPP2, SYF1, SYF2, RSE1 and YJU2. Component of the U4/U6-U5 tri-snRNP complex composed of the U4, U6 and U5 snRNAs and at least PRP3, PRP4, PRP6, PRP8, PRP18, PRP31, PRP38, SNU13, SNU23, SNU66, SNU114, SPP381, SMB1, SMD1, SMD2, SMD3, SMX2, SMX3, LSM2, LSM3, LSM4, LSM5, LSM6, LSM7, LSM8, BRR2 and DIB1. Interacts (via C-terminus) with CWC21. Interacts (via N-terminus) with PRP8 (via SCwid domain).

It is found in the nucleus. Component of the U5 snRNP complex required for pre-mRNA splicing. Binds GTP. This is Pre-mRNA-splicing factor SNU114 (SNU114) from Saccharomyces cerevisiae (strain ATCC 204508 / S288c) (Baker's yeast).